Here is a 464-residue protein sequence, read N- to C-terminus: Siroheme synthase (464 aa).

The segment at 1–203 (MEYLPLFHNL…GQGAEAERLL (203 aa)) is precorrin-2 dehydrogenase /sirohydrochlorin ferrochelatase. Residues 22-23 (EI) and 43-44 (PE) contribute to the NAD(+) site. S128 is modified (phosphoserine). The tract at residues 216–464 (GEVYLVGAGP…AWFEGAQSEV (249 aa)) is uroporphyrinogen-III C-methyltransferase. P225 lines the S-adenosyl-L-methionine pocket. Residue D248 is the Proton acceptor of the active site. Residue K270 is the Proton donor of the active site. Residues 301–303 (GGD), I306, 331–332 (TA), M383, and G412 contribute to the S-adenosyl-L-methionine site.

In the N-terminal section; belongs to the precorrin-2 dehydrogenase / sirohydrochlorin ferrochelatase family. This sequence in the C-terminal section; belongs to the precorrin methyltransferase family.

It catalyses the reaction uroporphyrinogen III + 2 S-adenosyl-L-methionine = precorrin-2 + 2 S-adenosyl-L-homocysteine + H(+). It carries out the reaction precorrin-2 + NAD(+) = sirohydrochlorin + NADH + 2 H(+). The enzyme catalyses siroheme + 2 H(+) = sirohydrochlorin + Fe(2+). It participates in cofactor biosynthesis; adenosylcobalamin biosynthesis; precorrin-2 from uroporphyrinogen III: step 1/1. Its pathway is cofactor biosynthesis; adenosylcobalamin biosynthesis; sirohydrochlorin from precorrin-2: step 1/1. It functions in the pathway porphyrin-containing compound metabolism; siroheme biosynthesis; precorrin-2 from uroporphyrinogen III: step 1/1. The protein operates within porphyrin-containing compound metabolism; siroheme biosynthesis; siroheme from sirohydrochlorin: step 1/1. It participates in porphyrin-containing compound metabolism; siroheme biosynthesis; sirohydrochlorin from precorrin-2: step 1/1. Multifunctional enzyme that catalyzes the SAM-dependent methylations of uroporphyrinogen III at position C-2 and C-7 to form precorrin-2 via precorrin-1. Then it catalyzes the NAD-dependent ring dehydrogenation of precorrin-2 to yield sirohydrochlorin. Finally, it catalyzes the ferrochelation of sirohydrochlorin to yield siroheme. The protein is Siroheme synthase of Pseudomonas fluorescens (strain ATCC BAA-477 / NRRL B-23932 / Pf-5).